A 361-amino-acid polypeptide reads, in one-letter code: Allatostatin-A receptor (361 aa).

At 1–46 the chain is on the extracellular side; the sequence is MESTEDEFYTICLNLTAEDPSFGNCNYTTDFENGELLEKVVSRVVP. 2 N-linked (GlcNAc...) asparagine glycosylation sites follow: N14 and N26. Residues 47–67 form a helical membrane-spanning segment; that stretch reads IFFGFIGIVGLVGNALVVLVV. Topologically, residues 68 to 78 are cytoplasmic; that stretch reads AANPGMRSTTN. A helical transmembrane segment spans residues 79-99; sequence LLIINLAVADLLFVIFCVPFT. The Extracellular segment spans residues 100–116; that stretch reads ATDYVMPRWPFGDWWCK. C115 and C196 are oxidised to a cystine. A helical transmembrane segment spans residues 117-137; the sequence is VVQYFIVVTAHASVYTLVLMS. The Cytoplasmic segment spans residues 138–158; sequence LDRFMAVVHPIASMSIRTEKN. The helical transmembrane segment at 159-179 threads the bilayer; sequence ALLAIACIWVVILTTAIPVGI. Residues 180-212 are Extracellular-facing; it reads CHGEREYSYFNRNHSSCVFLEERGYSKLGFQMS. A glycan (N-linked (GlcNAc...) asparagine) is linked at N192. Residues 213-233 form a helical membrane-spanning segment; sequence FFLSSYVIPLALISVLYMCML. The Cytoplasmic segment spans residues 234–259; it reads TRLWKSAPGGRVSAESRRGRKKVTRM. A helical membrane pass occupies residues 260–280; it reads VVVVVVVFAVCWCPIQIILLV. Topologically, residues 281–296 are extracellular; the sequence is KALNKYHITYFTVTAQ. The helical transmembrane segment at 297-317 threads the bilayer; sequence IVSHVLAYMNSCVNPVLYAFL. At 318–361 the chain is on the cytoplasmic side; the sequence is SENFRVAFRKVMYCPPPYNDGFSGRPQATKTTRTGNGNSCHDIV. The tract at residues 341 to 361 is disordered; it reads GRPQATKTTRTGNGNSCHDIV. The span at 343 to 361 shows a compositional bias: polar residues; the sequence is PQATKTTRTGNGNSCHDIV.

It belongs to the G-protein coupled receptor 1 family. In terms of tissue distribution, expressed in the midgut and, to a lesser extent, in the fore- and hindgut of fifth instar larvae. Also highly expressed in the brain of fourth and fifth instar larvae.

The protein resides in the cell membrane. Acts as a receptor for A-type allatostatin neuropeptide hormones. In Bombyx mori (Silk moth), this protein is Allatostatin-A receptor.